The chain runs to 181 residues: TATA-box-binding protein (181 aa).

Tandem repeats lie at residues Val-7–Leu-83 and Val-98–Leu-173.

It belongs to the TBP family.

General factor that plays a role in the activation of archaeal genes transcribed by RNA polymerase. Binds specifically to the TATA box promoter element which lies close to the position of transcription initiation. This is TATA-box-binding protein from Methanococcus maripaludis (strain DSM 14266 / JCM 13030 / NBRC 101832 / S2 / LL).